A 257-amino-acid chain; its full sequence is Glutamate racemase (257 aa).

Substrate is bound by residues 12 to 13 (DS) and 44 to 45 (YG). C75 acts as the Proton donor/acceptor in catalysis. 76-77 (NT) is a substrate binding site. The active-site Proton donor/acceptor is the C185. Residue 186 to 187 (TH) coordinates substrate.

The protein belongs to the aspartate/glutamate racemases family.

It catalyses the reaction L-glutamate = D-glutamate. The protein operates within cell wall biogenesis; peptidoglycan biosynthesis. Functionally, provides the (R)-glutamate required for cell wall biosynthesis. The chain is Glutamate racemase from Clostridium botulinum (strain ATCC 19397 / Type A).